A 325-amino-acid chain; its full sequence is Undecaprenyl-phosphate 4-deoxy-4-formamido-L-arabinose transferase (325 aa).

The next 2 helical transmembrane spans lie at 234 to 254 (LLSVIGSVIALMGFAFSLLLI) and 269 to 289 (VFMLFAVLFIFIGAQFVGMGL).

This sequence belongs to the glycosyltransferase 2 family.

The protein resides in the cell inner membrane. It carries out the reaction UDP-4-deoxy-4-formamido-beta-L-arabinose + di-trans,octa-cis-undecaprenyl phosphate = 4-deoxy-4-formamido-alpha-L-arabinopyranosyl di-trans,octa-cis-undecaprenyl phosphate + UDP. It functions in the pathway glycolipid biosynthesis; 4-amino-4-deoxy-alpha-L-arabinose undecaprenyl phosphate biosynthesis; 4-amino-4-deoxy-alpha-L-arabinose undecaprenyl phosphate from UDP-4-deoxy-4-formamido-beta-L-arabinose and undecaprenyl phosphate: step 1/2. The protein operates within bacterial outer membrane biogenesis; lipopolysaccharide biosynthesis. In terms of biological role, catalyzes the transfer of 4-deoxy-4-formamido-L-arabinose from UDP to undecaprenyl phosphate. The modified arabinose is attached to lipid A and is required for resistance to polymyxin and cationic antimicrobial peptides. In Erwinia tasmaniensis (strain DSM 17950 / CFBP 7177 / CIP 109463 / NCPPB 4357 / Et1/99), this protein is Undecaprenyl-phosphate 4-deoxy-4-formamido-L-arabinose transferase.